Consider the following 330-residue polypeptide: Putative glycosyltransferase ORF330 (330 aa).

The protein belongs to the glycosyltransferase group 1 family. Glycosyltransferase 4 subfamily.

This is Putative glycosyltransferase ORF330 from Acidianus filamentous virus 2 (isolate Italy/Pozzuoli) (AFV-2).